The primary structure comprises 482 residues: Pre-glycoprotein polyprotein GP complex (482 aa).

Residue glycine 2 is the site of N-myristoyl glycine; by host attachment. Over 2–17 (GQFISFMQEIPIFLQE) the chain is Extracellular. The chain crosses the membrane as a helical span at residues 18–32 (ALNIALVAVSLICIV). A topological domain (cytoplasmic) is located at residue lysine 33. Residues 34–53 (GLVNLYRCGLFQLMVFLVLA) form a helical membrane-spanning segment. Extracellular segments lie at residues 54 to 58 (GRSCS) and 59 to 421 (EETF…TLVD). Residue cysteine 57 coordinates Zn(2+). Asparagine 83 and asparagine 95 each carry an N-linked (GlcNAc...) asparagine; by host glycan. 5 disulfides stabilise this stretch: cysteine 92–cysteine 224, cysteine 134–cysteine 162, cysteine 205–cysteine 211, cysteine 269–cysteine 282, and cysteine 353–cysteine 374. Residues asparagine 164 and asparagine 176 are each glycosylated (N-linked (GlcNAc...) asparagine; by host). Asparagine 354, asparagine 362, asparagine 379, and asparagine 384 each carry an N-linked (GlcNAc...) asparagine; by host glycan. The helical transmembrane segment at 422 to 442 (ICFWSTEFFISTLFLHLIGFP) threads the bilayer. Topologically, residues 443-482 (THEHIRGEGCPLPHRLNSMGGCRCGKYLPLKKPTIWHRRH) are cytoplasmic. Residues histidine 444, histidine 446, cysteine 452, histidine 456, cysteine 464, cysteine 466, and histidine 482 each coordinate Zn(2+).

It belongs to the arenaviridae GPC protein family. In terms of assembly, homotetramer; disulfide-linked. Homotetramer. GP2 homotetramers bind through ionic interactions with GP1 homotetramers to form the GP complex together with the stable signal peptide. The GP-C polyprotein interacts with the host protease MBTPS1/SKI-1 resulting in the polyprotein processing. Post-translationally, specific enzymatic cleavages in vivo yield mature proteins. GP-C polyprotein is cleaved in the endoplasmic reticulum by the host protease MBTPS1. Only cleaved glycoprotein is incorporated into virions. The SSP remains stably associated with the GP complex following cleavage by signal peptidase and plays crucial roles in the trafficking of GP through the secretory pathway. In terms of processing, myristoylation is necessary for GP2-mediated fusion activity.

The protein resides in the virion membrane. It is found in the host endoplasmic reticulum membrane. Its subcellular location is the host Golgi apparatus membrane. The protein localises to the host cell membrane. Functionally, class I viral fusion protein that directs fusion of viral and host endosomal membranes, leading to delivery of the nucleocapsid into the cytoplasm. Membrane fusion is mediated by irreversible conformational changes induced upon acidification in the endosome. In terms of biological role, stable signal peptide (SSP): cleaved and functions as a signal peptide. In addition, it is also retained as the third component of the GP complex. The SSP is required for efficient glycoprotein expression, post-translational maturation cleavage of GP1 and GP2, glycoprotein transport to the cell surface plasma membrane, formation of infectious virus particles, and acid pH-dependent glycoprotein-mediated cell fusion. Interacts with the host receptor. This is Pre-glycoprotein polyprotein GP complex from Artibeus (neotropical fruit bats).